A 313-amino-acid polypeptide reads, in one-letter code: Chemotaxis protein CheV2 (313 aa).

Residues 16–172 (EAQFLCFRLD…VEKMISDVFP (157 aa)) form the CheW-like domain. The 121-residue stretch at 193–313 (LILIAEDSLS…IHEMLKKTLS (121 aa)) folds into the Response regulatory domain. Asp-246 bears the 4-aspartylphosphate mark.

In terms of processing, phosphorylated; probably by transfer of CheAY phosphate group.

In terms of biological role, plays a role in chemotaxis signal transduction system in order to colonize the host stomach. May act as a phosphate sink to control the flow of phosphate to CheAY. The protein is Chemotaxis protein CheV2 of Helicobacter pylori (strain ATCC 700392 / 26695) (Campylobacter pylori).